A 206-amino-acid chain; its full sequence is TPR repeat-containing protein YrrB (206 aa).

6 TPR repeats span residues 1–23 (MQEGDYEKAAEAFTKAIEENKED), 24–57 (AIPYINFANLLSSVNELERALAFYDKALELDSSA), 59–91 (TAYYGAGNVYVVKEMYKEAKDMFEKALRAGMEN), 93–125 (DLFYMLGTVLVKLEQPKLALPYLQRAVELNEND), 127–159 (EARFQFGMCLANEGMLDEALSQFAAVTEQDPGH), and 160–193 (ADAFYNAGVTYAYKENREKALEMLDKAIDIQPDH).

In terms of assembly, monomer.

Could be an interacting mediator in the complex formation among RNA sulfuration components, RNA processing components, and aminoacyl-tRNA synthetases. The sequence is that of TPR repeat-containing protein YrrB (yrrB) from Bacillus subtilis (strain 168).